The sequence spans 360 residues: Protein Wnt-2 (360 aa).

Positions 1 to 25 are cleaved as a signal peptide; the sequence is MNAPLGGIWLWLPLLLTWLTPEVNS. 11 disulfides stabilise this stretch: Cys76-Cys87, Cys127-Cys135, Cys137-Cys157, Cys206-Cys220, Cys208-Cys215, Cys278-Cys309, Cys294-Cys304, Cys308-Cys348, Cys324-Cys339, Cys326-Cys336, and Cys331-Cys332. A lipid anchor (O-palmitoleoyl serine; by PORCN) is attached at Ser212. Asn295 carries N-linked (GlcNAc...) asparagine glycosylation.

Belongs to the Wnt family. In terms of processing, palmitoleoylation is required for efficient binding to frizzled receptors. Depalmitoleoylation leads to Wnt signaling pathway inhibition. In terms of tissue distribution, expressed in brain in the thalamus, in fetal and adult lung and in placenta.

It localises to the secreted. The protein localises to the extracellular space. It is found in the extracellular matrix. Functionally, ligand for members of the frizzled family of seven transmembrane receptors. Functions in the canonical Wnt signaling pathway that results in activation of transcription factors of the TCF/LEF family. Functions as a upstream regulator of FGF10 expression. Plays an important role in embryonic lung development. May contribute to embryonic brain development by regulating the proliferation of dopaminergic precursors and neurons. The protein is Protein Wnt-2 (WNT2) of Homo sapiens (Human).